Reading from the N-terminus, the 376-residue chain is Protein FhaE (376 aa).

The N-terminal stretch at 1-37 (MSQIFADRRAAVPARVISFCGAALAVWAGLAVQPAMA) is a signal peptide.

The protein is Protein FhaE (fhaE) of Bordetella pertussis (strain Tohama I / ATCC BAA-589 / NCTC 13251).